The following is a 437-amino-acid chain: Protein translocase subunit SecY (437 aa).

The next 10 membrane-spanning stretches (helical) occupy residues 19–39 (LFTLGIIVIYRLGAHIPAPGV), 68–88 (LLQITIFALGIMPYITASIIL), 121–141 (VALAILQGTGLVATARSGALF), 156–176 (IFTTIIMVLTMTAGTPPVMWL), 188–208 (GMSIPMFISIAATFPGALWAI), 218–238 (WIEFGTVILIGFVMVALVVFV), 274–294 (GVIPVIFASSLLYIPALIVQF), 317–337 (YIATYFVLIVFFAFFYVAISF), 378–398 (SLYLGLIALVPTMALAGFGGA), and 400–420 (QNFPFGGTSILIIVGVGLETV).

The protein belongs to the SecY/SEC61-alpha family. As to quaternary structure, component of the Sec protein translocase complex. Heterotrimer consisting of SecY, SecE and SecG subunits. The heterotrimers can form oligomers, although 1 heterotrimer is thought to be able to translocate proteins. Interacts with the ribosome. Interacts with SecDF, and other proteins may be involved. Interacts with SecA.

Its subcellular location is the cell membrane. Functionally, the central subunit of the protein translocation channel SecYEG. Consists of two halves formed by TMs 1-5 and 6-10. These two domains form a lateral gate at the front which open onto the bilayer between TMs 2 and 7, and are clamped together by SecE at the back. The channel is closed by both a pore ring composed of hydrophobic SecY resides and a short helix (helix 2A) on the extracellular side of the membrane which forms a plug. The plug probably moves laterally to allow the channel to open. The ring and the pore may move independently. The chain is Protein translocase subunit SecY from Streptomyces griseus.